The following is a 318-amino-acid chain: Protoheme IX farnesyltransferase (318 aa).

9 helical membrane passes run 37 to 57 (VMEL…RGLP), 59 to 79 (IWLI…AGAF), 108 to 128 (EALV…WFGA), 131 to 151 (LAGL…TLIL), 158 to 178 (NIVW…AAVT), 183 to 203 (WPAI…YWPL), 216 to 238 (VPML…YTWA), 249 to 269 (LGHA…WFLL), and 296 to 316 (ISYL…GMPL).

It belongs to the UbiA prenyltransferase family. Protoheme IX farnesyltransferase subfamily.

The protein localises to the cell membrane. It carries out the reaction heme b + (2E,6E)-farnesyl diphosphate + H2O = Fe(II)-heme o + diphosphate. Its pathway is porphyrin-containing compound metabolism; heme O biosynthesis; heme O from protoheme: step 1/1. Its function is as follows. Converts heme B (protoheme IX) to heme O by substitution of the vinyl group on carbon 2 of heme B porphyrin ring with a hydroxyethyl farnesyl side group. The protein is Protoheme IX farnesyltransferase of Renibacterium salmoninarum (strain ATCC 33209 / DSM 20767 / JCM 11484 / NBRC 15589 / NCIMB 2235).